Reading from the N-terminus, the 328-residue chain is PhoH-like protein (328 aa).

135 to 142 contributes to the ATP binding site; it reads GPAGTGKT.

It belongs to the PhoH family.

It localises to the cytoplasm. The protein is PhoH-like protein of Synechocystis sp. (strain ATCC 27184 / PCC 6803 / Kazusa).